A 104-amino-acid chain; its full sequence is MSEKINANQDNDRQITLVDDQGNEELFEILFTFTSEDYGKSYVLLYPAAVSDDDDVEVQAFSYDADEDGDVTSSDLHEISDDDEWNMVQGVLNTFLSDDRLSGE.

Belongs to the UPF0473 family.

In Lactobacillus gasseri (strain ATCC 33323 / DSM 20243 / BCRC 14619 / CIP 102991 / JCM 1131 / KCTC 3163 / NCIMB 11718 / NCTC 13722 / AM63), this protein is UPF0473 protein LGAS_0424.